A 154-amino-acid chain; its full sequence is Transcriptional repressor NrdR (154 aa).

A zinc finger lies at 3–34 (CPFCGANDTKVIDSRLVAEGEQVRRRRECVAC). Residues 49-139 (PRLIKQDGTR…VYRRFQDLDE (91 aa)) form the ATP-cone domain.

It belongs to the NrdR family. Zn(2+) serves as cofactor.

Its function is as follows. Negatively regulates transcription of bacterial ribonucleotide reductase nrd genes and operons by binding to NrdR-boxes. In Pseudomonas putida (strain ATCC 700007 / DSM 6899 / JCM 31910 / BCRC 17059 / LMG 24140 / F1), this protein is Transcriptional repressor NrdR.